The sequence spans 984 residues: MYCBP-associated protein (984 aa).

Disordered regions lie at residues 61–88 and 218–240; these read LEASENVKEKKRAKGPEQPTPTIQEEPE and GESKQKAPKEEKRPPWAPPPQHN. The segment covering 218–231 has biased composition (basic and acidic residues); sequence GESKQKAPKEEKRP. Residue Thr613 is modified to Phosphothreonine. Ser619 is modified (phosphoserine). Disordered regions lie at residues 693–729 and 842–917; these read SPISETQVPRPENEALRESGSQKARVGTKSPQRKSIM and PEEQ…ASQD. A compositionally biased stretch (basic and acidic residues) spans 862–910; sequence AGKEERKGAAQEKKQLGIKDKEDKKGAKLLGKEDRPNSKKHKAKDDKKV.

As to quaternary structure, interacts with MYCBP. As to expression, expressed specifically in testis.

The protein resides in the cytoplasm. Its subcellular location is the membrane. In terms of biological role, may play a role in spermatogenesis. May be involved in synaptic processes. The sequence is that of MYCBP-associated protein from Homo sapiens (Human).